Reading from the N-terminus, the 318-residue chain is Methionyl-tRNA formyltransferase (318 aa).

117–120 (SLLP) provides a ligand contact to (6S)-5,6,7,8-tetrahydrofolate.

This sequence belongs to the Fmt family.

It carries out the reaction L-methionyl-tRNA(fMet) + (6R)-10-formyltetrahydrofolate = N-formyl-L-methionyl-tRNA(fMet) + (6S)-5,6,7,8-tetrahydrofolate + H(+). In terms of biological role, attaches a formyl group to the free amino group of methionyl-tRNA(fMet). The formyl group appears to play a dual role in the initiator identity of N-formylmethionyl-tRNA by promoting its recognition by IF2 and preventing the misappropriation of this tRNA by the elongation apparatus. The protein is Methionyl-tRNA formyltransferase of Malacoplasma penetrans (strain HF-2) (Mycoplasma penetrans).